Reading from the N-terminus, the 199-residue chain is MKFSPLLDELIQSLRCLPGVGPKSAQRMAFQLLERDRKAGLKLASALSSAMSDVGHCQSCRTYTEETLCPICASHKRGTSSTICVVETPADVLAIEAGGHFTGRYFVLLGHLSPLDGVGPEELGLALLERHLASGDVAELILATNPTVEGEATAHFIADMARRHKVMISRIAHGVPVGGELEYVDSTTLALSFNGRLPL.

The C4-type zinc-finger motif lies at 57–72 (CQSCRTYTEETLCPIC). Residues 81–176 (STICVVETPA…MISRIAHGVP (96 aa)) form the Toprim domain.

It belongs to the RecR family.

Its function is as follows. May play a role in DNA repair. It seems to be involved in an RecBC-independent recombinational process of DNA repair. It may act with RecF and RecO. This chain is Recombination protein RecR, found in Shewanella baltica (strain OS195).